A 267-amino-acid chain; its full sequence is MGSAFDPLVTATEDLAAVNSAPPLSNLTQEELKKIAAYKAVEFVESGMVIGLGTGSTAKHAVARISELLREGKLKDIIGIPTSTTTHEQAVSLGIPLSDLDSHPVVDLSIDGADEVDPALNLVKGRGGSLLREKMIEGASKKFVVIVDESKLVKYIGGSGLAVPVEVVPFCCDFTRGKLEELFRDSGCVAKLRMKIGSNGEEAAPAVTDNRNYVVDLYLERDIGDLEVASEAILRFPGVVEHGMFLGMATTLIVAGKFGVTVKDRFG.

G2 is subject to N-acetylglycine. S92 is modified (phosphoserine).

The protein belongs to the ribose 5-phosphate isomerase family. In terms of tissue distribution, expressed in roots, cotyledons, leaves and flowers.

The protein localises to the cytoplasm. It catalyses the reaction aldehydo-D-ribose 5-phosphate = D-ribulose 5-phosphate. The protein operates within carbohydrate degradation; pentose phosphate pathway; D-ribose 5-phosphate from D-ribulose 5-phosphate (non-oxidative stage): step 1/1. Catalyzes the reversible conversion of ribose-5-phosphate to ribulose 5-phosphate. This Arabidopsis thaliana (Mouse-ear cress) protein is Probable ribose-5-phosphate isomerase 1 (RPI1).